Consider the following 965-residue polypeptide: Calsyntenin-2 (965 aa).

The N-terminal stretch at 1-20 (MLPGRLCLVPLLLALGVGSG) is a signal peptide. At 21-835 (GGSGDGGDSR…SIQRSSVVPS (815 aa)) the chain is on the extracellular side. 2 Cadherin domains span residues 46-162 (IETS…APTF) and 163-282 (KEPA…MPLF). N-linked (GlcNAc...) asparagine glycosylation is found at Asn-58 and Asn-100. N-linked (GlcNAc...) asparagine glycans are attached at residues Asn-344, Asn-376, Asn-720, and Asn-733. Residues 836 to 856 (IATVVIIISVCMLVFVVAMGV) traverse the membrane as a helical segment. The Cytoplasmic segment spans residues 857-965 (YRVRIAHQHF…NTAGVINIWK (109 aa)). The segment at 891 to 965 (PMEKHEGPGH…NTAGVINIWK (75 aa)) is disordered. Residues 892–902 (MEKHEGPGHGE) are compositionally biased toward basic and acidic residues. The span at 903-915 (DETEGEEEEEAEE) shows a compositional bias: acidic residues. The segment covering 942-959 (QSGTSSQRPERSTWNTAG) has biased composition (polar residues).

The protein belongs to the calsyntenin family. Proteolytically processed under normal cellular conditions. A primary zeta-cleavage generates a large extracellular (soluble) N-terminal domain (sAlc) and a short C-terminal transmembrane fragment (CTF1). A secondary cleavage catalyzed by gamma-secretase within the transmembrane domain releases the beta-Alc-gamma chain in the extracellular milieu and produces an intracellular fragment (AlcICD). This processing is strongly suppressed in the tripartite complex formed with APBA2 and APP, which seems to prevent the association with PSEN1.

The protein resides in the postsynaptic cell membrane. It localises to the endoplasmic reticulum membrane. The protein localises to the golgi apparatus membrane. It is found in the cell projection. Its subcellular location is the dendrite. Its function is as follows. Postsynaptic adhesion molecule that binds to presynaptic neurexins to mediate synapse formation, and which is involved in learning and memory. Promotes synapse development by acting as a cell adhesion molecule at the postsynaptic membrane, which associates with neurexin-alpha at the presynaptic membrane. The chain is Calsyntenin-2 from Rattus norvegicus (Rat).